The sequence spans 256 residues: DNA repair protein RecO (256 aa).

Belongs to the RecO family.

In terms of biological role, involved in DNA repair and RecF pathway recombination. In Bacillus pumilus (strain SAFR-032), this protein is DNA repair protein RecO.